We begin with the raw amino-acid sequence, 430 residues long: Adenylosuccinate synthetase (430 aa).

Residues 12–18 (GDEGKGK) and 40–42 (GHT) each bind GTP. Aspartate 13 acts as the Proton acceptor in catalysis. Residues aspartate 13 and glycine 40 each coordinate Mg(2+). IMP-binding positions include 13 to 16 (DEGK), 38 to 41 (NAGH), threonine 130, arginine 144, glutamine 224, threonine 239, and arginine 303. Histidine 41 functions as the Proton donor in the catalytic mechanism. A substrate-binding site is contributed by 299 to 305 (TVTGRKR). GTP is bound by residues arginine 305, 331–333 (KLD), and 413–415 (STS).

This sequence belongs to the adenylosuccinate synthetase family. In terms of assembly, homodimer. Mg(2+) serves as cofactor.

It localises to the cytoplasm. The catalysed reaction is IMP + L-aspartate + GTP = N(6)-(1,2-dicarboxyethyl)-AMP + GDP + phosphate + 2 H(+). Its pathway is purine metabolism; AMP biosynthesis via de novo pathway; AMP from IMP: step 1/2. Its function is as follows. Plays an important role in the de novo pathway of purine nucleotide biosynthesis. Catalyzes the first committed step in the biosynthesis of AMP from IMP. The protein is Adenylosuccinate synthetase of Cereibacter sphaeroides (strain ATCC 17029 / ATH 2.4.9) (Rhodobacter sphaeroides).